A 533-amino-acid chain; its full sequence is Tyrosine/DOPA decarboxylase 3 (533 aa).

An N6-(pyridoxal phosphate)lysine modification is found at Lys-319.

This sequence belongs to the group II decarboxylase family. Homodimer. Requires pyridoxal 5'-phosphate as cofactor. Roots.

The enzyme catalyses L-tyrosine + H(+) = tyramine + CO2. It carries out the reaction L-dopa + H(+) = dopamine + CO2. The catalysed reaction is 5-hydroxy-L-tryptophan + H(+) = serotonin + CO2. In terms of biological role, marginally higher substrate specificity for L-DOPA over L-tyrosine. In Papaver somniferum (Opium poppy), this protein is Tyrosine/DOPA decarboxylase 3 (TYDC3).